Reading from the N-terminus, the 99-residue chain is Small ribosomal subunit protein bS20 (99 aa).

It belongs to the bacterial ribosomal protein bS20 family.

Functionally, binds directly to 16S ribosomal RNA. The chain is Small ribosomal subunit protein bS20 from Prochlorococcus marinus (strain SARG / CCMP1375 / SS120).